The following is a 291-amino-acid chain: Small ribosomal subunit protein uS2 (291 aa).

Positions 238–247 (DEESGDELDE) are enriched in acidic residues. The interval 238-291 (DEESGDELDESVSLHEEGREITDYENYTPPEEREYSVNDEGDVFDEDESLYEGR) is disordered. Residues 249–259 (VSLHEEGREIT) are compositionally biased toward basic and acidic residues. Residues 274-291 (VNDEGDVFDEDESLYEGR) are compositionally biased toward acidic residues.

This sequence belongs to the universal ribosomal protein uS2 family.

The protein is Small ribosomal subunit protein uS2 (rpsB) of Treponema pallidum (strain Nichols).